The sequence spans 91 residues: ATP synthase subunit c (91 aa).

A run of 2 helical transmembrane segments spans residues 4–24 (FTMC…GTGI) and 53–73 (IGLA…LIIL).

It belongs to the ATPase C chain family. F-type ATPases have 2 components, F(1) - the catalytic core - and F(0) - the membrane proton channel. F(1) has five subunits: alpha(3), beta(3), gamma(1), delta(1), epsilon(1). F(0) has three main subunits: a(1), b(2) and c(10-14). The alpha and beta chains form an alternating ring which encloses part of the gamma chain. F(1) is attached to F(0) by a central stalk formed by the gamma and epsilon chains, while a peripheral stalk is formed by the delta and b chains.

The protein resides in the cell inner membrane. F(1)F(0) ATP synthase produces ATP from ADP in the presence of a proton or sodium gradient. F-type ATPases consist of two structural domains, F(1) containing the extramembraneous catalytic core and F(0) containing the membrane proton channel, linked together by a central stalk and a peripheral stalk. During catalysis, ATP synthesis in the catalytic domain of F(1) is coupled via a rotary mechanism of the central stalk subunits to proton translocation. In terms of biological role, key component of the F(0) channel; it plays a direct role in translocation across the membrane. A homomeric c-ring of between 10-14 subunits forms the central stalk rotor element with the F(1) delta and epsilon subunits. The polypeptide is ATP synthase subunit c (Geotalea uraniireducens (strain Rf4) (Geobacter uraniireducens)).